Here is a 341-residue protein sequence, read N- to C-terminus: Putative UPF0607 protein ENSP00000381514 (341 aa).

A compositionally biased stretch (basic and acidic residues) spans 78-89 (AEEPKEATEVKD). 2 disordered regions span residues 78 to 131 (AEEP…NPRP) and 216 to 282 (GLLT…KLPC). Polar residues predominate over residues 108-127 (EAASTSRPLETQGNLTSSWY). Residues 243–252 (AGHRSRKRKL) are compositionally biased toward basic residues.

This sequence belongs to the UPF0607 family.

This Homo sapiens (Human) protein is Putative UPF0607 protein ENSP00000381514.